We begin with the raw amino-acid sequence, 268 residues long: Tetratricopeptide repeat protein 33 (268 aa).

Positions 14–34 (VSKQTVQQFEQDSEQADEDEV) are disordered. Over residues 24 to 34 (QDSEQADEDEV) the composition is skewed to acidic residues. TPR repeat units follow at residues 60–93 (SKRL…TPED), 94–127 (AVLY…RPIW), and 128–161 (WEAW…HPSE). The segment at 249–268 (EGDDNPTSSSQSVLIKARGL) is disordered.

This chain is Tetratricopeptide repeat protein 33 (ttc33), found in Danio rerio (Zebrafish).